The primary structure comprises 416 residues: MDAEIIAIGSEMLTPERLDTNSLYLTAELNKLGVEVVSKCVIGDDRNRLAEQVRHSIARSAIVIITGGLGPTEDDVTREAVAMALDRKLTLNSEVLSWLEQRFAAAKRHMAEVNKRQAFVIEGAGILPNDRGTAPGQWLEESGAFAMLLPGPPHELKAMFERQCLPRLARVVPKQVIRTLFMRVAGMGESDLDQLIAPVYKKYENPATTILAAAGDIQIHLRARCRTESEGDALLAEVAGPIELLLGDRIYSRNGDSLEVVVGGLLRKLHATVCVAESATGGMLGERLTTVPGSSEYFTGGFITYNNQMKMELLGVSPEILQEHGAVSKETAEAMAIGARRRTSSTYALSITGAAGPDSADERVPVGTMYTAIADAAGTLVVHRQFLGDRQRIRTFVTQMALDLLRRRITGKTQTA.

The protein belongs to the CinA family.

This chain is CinA-like protein, found in Solibacter usitatus (strain Ellin6076).